Consider the following 340-residue polypeptide: Glucokinase (340 aa).

17 to 22 (GDIGGT) contacts ATP.

This sequence belongs to the bacterial glucokinase family.

It localises to the cytoplasm. It catalyses the reaction D-glucose + ATP = D-glucose 6-phosphate + ADP + H(+). The polypeptide is Glucokinase (Allorhizobium ampelinum (strain ATCC BAA-846 / DSM 112012 / S4) (Agrobacterium vitis (strain S4))).